The following is a 199-amino-acid chain: Heparin-binding hemagglutinin (199 aa).

A compositionally biased stretch (low complexity) spans 162–180 (KAAPAKKAAPAKKAAPAKK). Residues 162–199 (KAAPAKKAAPAKKAAPAKKAAAKKAPAKKAAAKKVTQK) are disordered. Over residues 181–199 (AAAKKAPAKKAAAKKVTQK) the composition is skewed to basic residues.

To M.leprae HbhA. Post-translationally, glycosylated. Glycosylation may protect the protein from proteolytic degradation and be important for hemagglutination. It suggests that the carbohydrate moiety may be located within the C-terminal domain of HbhA.

The protein resides in the cell surface. Required for extrapulmonary dissemination. Mediates adherence to epithelial cells by binding to sulfated glycoconjugates present at the surface of these cells. This Mycobacterium tuberculosis (strain CDC 1551 / Oshkosh) protein is Heparin-binding hemagglutinin (hbhA).